We begin with the raw amino-acid sequence, 1014 residues long: Isoleucine--tRNA ligase (1014 aa).

The short motif at Pro48–His58 is the 'HIGH' region element. Residues Lys628–Ser632 carry the 'KMSKS' region motif. Lys631 is an ATP binding site.

Belongs to the class-I aminoacyl-tRNA synthetase family. IleS type 2 subfamily. Monomer. It depends on Zn(2+) as a cofactor.

Its subcellular location is the cytoplasm. The catalysed reaction is tRNA(Ile) + L-isoleucine + ATP = L-isoleucyl-tRNA(Ile) + AMP + diphosphate. Its function is as follows. Catalyzes the attachment of isoleucine to tRNA(Ile). As IleRS can inadvertently accommodate and process structurally similar amino acids such as valine, to avoid such errors it has two additional distinct tRNA(Ile)-dependent editing activities. One activity is designated as 'pretransfer' editing and involves the hydrolysis of activated Val-AMP. The other activity is designated 'posttransfer' editing and involves deacylation of mischarged Val-tRNA(Ile). The chain is Isoleucine--tRNA ligase from Dehalococcoides mccartyi (strain ATCC BAA-2266 / KCTC 15142 / 195) (Dehalococcoides ethenogenes (strain 195)).